The primary structure comprises 335 residues: Phospho-N-acetylmuramoyl-pentapeptide-transferase (335 aa).

10 helical membrane passes run 3–23 (LTLI…PHFI), 53–73 (GGTV…ILFF), 78–98 (SMGL…IGFL), 118–138 (LSLQ…PSGI), 143–163 (VFGF…FWVV), 175–195 (IDGL…VIAI), 200–220 (YDVL…FIFN), 226–246 (VFMG…ISIA), 251–271 (WTLL…MLQV), and 314–334 (VDAF…AILY).

Belongs to the glycosyltransferase 4 family. MraY subfamily. Mg(2+) serves as cofactor.

The protein resides in the cell membrane. It carries out the reaction UDP-N-acetyl-alpha-D-muramoyl-L-alanyl-gamma-D-glutamyl-L-lysyl-D-alanyl-D-alanine + di-trans,octa-cis-undecaprenyl phosphate = Mur2Ac(oyl-L-Ala-gamma-D-Glu-L-Lys-D-Ala-D-Ala)-di-trans,octa-cis-undecaprenyl diphosphate + UMP. Its pathway is cell wall biogenesis; peptidoglycan biosynthesis. In terms of biological role, catalyzes the initial step of the lipid cycle reactions in the biosynthesis of the cell wall peptidoglycan: transfers peptidoglycan precursor phospho-MurNAc-pentapeptide from UDP-MurNAc-pentapeptide onto the lipid carrier undecaprenyl phosphate, yielding undecaprenyl-pyrophosphoryl-MurNAc-pentapeptide, known as lipid I. The protein is Phospho-N-acetylmuramoyl-pentapeptide-transferase of Streptococcus uberis (strain ATCC BAA-854 / 0140J).